We begin with the raw amino-acid sequence, 419 residues long: Probable pectate lyase C (419 aa).

The first 19 residues, 1 to 19, serve as a signal peptide directing secretion; the sequence is MRLGIALFSLIGLCHSVSA. N-linked (GlcNAc...) asparagine glycosylation is found at N48, N164, and N201. Residue R204 is part of the active site. Residues 261–296 enclose the EF-hand domain; sequence NEYFHGYVETNYYDPDRDGTLNGNELGVSASNYGGM. Ca(2+) contacts are provided by D274, D276, D278, T280, and E285. A disordered region spans residues 350 to 395; that stretch reads ELISDEASMGGPGDLDGGSPPTDSDGDGIPDDAETEIGSDPNTADS. Positions 373–386 are enriched in acidic residues; sequence SDGDGIPDDAETEI.

It belongs to the polysaccharide lyase 1 family. Ca(2+) serves as cofactor.

Its subcellular location is the secreted. The catalysed reaction is Eliminative cleavage of (1-&gt;4)-alpha-D-galacturonan to give oligosaccharides with 4-deoxy-alpha-D-galact-4-enuronosyl groups at their non-reducing ends.. Pectinolytic enzyme consist of four classes of enzymes: pectin lyase, polygalacturonase, pectin methylesterase and rhamnogalacturonase. Among pectinolytic enzymes, pectin lyase is the most important in depolymerization of pectin, since it cleaves internal glycosidic bonds of highly methylated pectins. Favors pectate, the anion, over pectin, the methyl ester. The chain is Probable pectate lyase C (plyC) from Aspergillus terreus (strain NIH 2624 / FGSC A1156).